The chain runs to 253 residues: Triosephosphate isomerase (253 aa).

Residue 9–11 (NWK) participates in substrate binding. His-97 (electrophile) is an active-site residue. Catalysis depends on Glu-169, which acts as the Proton acceptor. Residues Gly-175, Ser-215, and 236–237 (GG) contribute to the substrate site.

The protein belongs to the triosephosphate isomerase family. In terms of assembly, homodimer.

It localises to the cytoplasm. The catalysed reaction is D-glyceraldehyde 3-phosphate = dihydroxyacetone phosphate. Its pathway is carbohydrate biosynthesis; gluconeogenesis. It functions in the pathway carbohydrate degradation; glycolysis; D-glyceraldehyde 3-phosphate from glycerone phosphate: step 1/1. Functionally, involved in the gluconeogenesis. Catalyzes stereospecifically the conversion of dihydroxyacetone phosphate (DHAP) to D-glyceraldehyde-3-phosphate (G3P). This Staphylococcus epidermidis (strain ATCC 35984 / DSM 28319 / BCRC 17069 / CCUG 31568 / BM 3577 / RP62A) protein is Triosephosphate isomerase.